The primary structure comprises 48 residues: Large ribosomal subunit protein bL33A (48 aa).

This sequence belongs to the bacterial ribosomal protein bL33 family.

The chain is Large ribosomal subunit protein bL33A from Metamycoplasma arthritidis (strain 158L3-1) (Mycoplasma arthritidis).